The primary structure comprises 111 residues: uncharacterized protein (111 aa).

A disordered region spans residues 1–85; sequence MTGLMKAFQK…TSSREDEQKL (85 aa). The span at 11 to 23 shows a compositional bias: polar residues; sequence LSPTKRQYAEITQ. The segment covering 24–42 has biased composition (low complexity); that stretch reads SNSSISSSSSGSKYNDSSS. Residues 56–77 are compositionally biased toward polar residues; the sequence is ARASTSTQAQKPASSQQKGGTS.

This is an uncharacterized protein from Microplitis demolitor (Parasitoid wasp).